Consider the following 1722-residue polypeptide: Signal-induced proliferation-associated 1-like protein 2 (1722 aa).

Disordered stretches follow at residues 1 to 29 (MSDPRPSQAEKHKLGRAAAKLKDPSRTMQ) and 44 to 72 (SMGPATLNTSSSSEGGGGGGGPANGTPAV). Residues 57–66 (EGGGGGGGPA) are compositionally biased toward gly residues. 3 positions are modified to phosphoserine: serine 149, serine 380, and serine 384. A disordered region spans residues 362–405 (ASAASQTPVPVGPAGGCESPLGSKEDLNSKENPDADEGDGKSND). Positions 384 to 403 (SKEDLNSKENPDADEGDGKS) are enriched in basic and acidic residues. One can recognise a Rap-GAP domain in the interval 596–813 (LLKLDEQGLS…RTRQEYLKDL (218 aa)). In terms of domain architecture, PDZ spans 951-1027 (EMTLRRNGLG…VKVVIIQPHE (77 aa)). A Phosphoserine modification is found at serine 1030. Disordered stretches follow at residues 1068–1246 (HRVP…FGSG) and 1331–1360 (GSMGDLSEVSSHSSGSQHSGSPSAHCSKST). 2 stretches are compositionally biased toward low complexity: residues 1091–1103 (LQCQPLLQQAQAA) and 1120–1131 (SSPSNQSSSSDP). Residues 1195–1218 (YKERVLQKDGSCKESPNKLSHIGD) show a composition bias toward basic and acidic residues. Positions 1220–1237 (SCSSHSSSNTLSSNTSSN) are enriched in low complexity. Phosphoserine is present on serine 1245. The span at 1331 to 1355 (GSMGDLSEVSSHSSGSQHSGSPSAH) shows a compositional bias: low complexity. Phosphoserine occurs at positions 1461, 1472, 1478, 1488, 1549, 1552, and 1591. Positions 1652–1712 (STLTGKVNQL…ATAQLRKFTE (61 aa)) form a coiled coil.

This is Signal-induced proliferation-associated 1-like protein 2 (Sipa1l2) from Mus musculus (Mouse).